The primary structure comprises 427 residues: Enolase (427 aa).

A (2R)-2-phosphoglycerate-binding site is contributed by Gln-163. The Proton donor role is filled by Glu-205. Asp-242, Glu-285, and Asp-312 together coordinate Mg(2+). The (2R)-2-phosphoglycerate site is built by Lys-337, Arg-366, Ser-367, and Lys-388. The active-site Proton acceptor is the Lys-337.

It belongs to the enolase family. It depends on Mg(2+) as a cofactor.

It is found in the cytoplasm. It localises to the secreted. Its subcellular location is the cell surface. It catalyses the reaction (2R)-2-phosphoglycerate = phosphoenolpyruvate + H2O. Its pathway is carbohydrate degradation; glycolysis; pyruvate from D-glyceraldehyde 3-phosphate: step 4/5. Catalyzes the reversible conversion of 2-phosphoglycerate (2-PG) into phosphoenolpyruvate (PEP). It is essential for the degradation of carbohydrates via glycolysis. This Rhodopseudomonas palustris (strain TIE-1) protein is Enolase.